The primary structure comprises 133 residues: L-ectoine synthase (133 aa).

It belongs to the ectoine synthase family.

The catalysed reaction is (2S)-4-acetamido-2-aminobutanoate = L-ectoine + H2O. It functions in the pathway amine and polyamine biosynthesis; ectoine biosynthesis; L-ectoine from L-aspartate 4-semialdehyde: step 3/3. Catalyzes the circularization of gamma-N-acetyl-alpha,gamma-diaminobutyric acid (ADABA) to ectoine (1,4,5,6-tetrahydro-2-methyl-4-pyrimidine carboxylic acid), which is an excellent osmoprotectant. This Bordetella petrii (strain ATCC BAA-461 / DSM 12804 / CCUG 43448) protein is L-ectoine synthase.